The sequence spans 585 residues: Bestrophin-1 (585 aa).

Topologically, residues 1–31 (MTITYTSQVANARLGSFSRLLLCWRGSIYKL) are cytoplasmic. A10 provides a ligand contact to Ca(2+). Residues 32-51 (LYGEFLIFLLCYYIIRFIYR) traverse the membrane as a helical segment. The Extracellular portion of the chain corresponds to 52–60 (LALTEEQQL). A helical membrane pass occupies residues 61 to 82 (MFEKLTLYCDSYIQLIPISFVL). The Cytoplasmic portion of the chain corresponds to 83–237 (GFYVTLVVTR…DWISIPLVYT (155 aa)). Residues 238-255 (QVVTVAVYSFFLTCLVGR) traverse the membrane as a helical segment. At 256 to 274 (QFLNPAKAYPGHELDLVVP) the chain is on the extracellular side. The chain crosses the membrane as a helical span at residues 275-288 (VFTFLQFFFYVGWL). Residues 289 to 585 (KVAEQLINPF…ALENRDEAHS (297 aa)) lie on the Cytoplasmic side of the membrane. Ca(2+) contacts are provided by Q293, N296, D301, and D304. Residues 346–379 (PYTAASAQFRRASFMGSTFNISLNKEEMEFQPNQ) form an auto-inhibitory segment region.

This sequence belongs to the anion channel-forming bestrophin (TC 1.A.46) family. Calcium-sensitive chloride channel subfamily. As to quaternary structure, interacts with YWHAG; this interaction promotes the ligand-gated L-glutamate channel activity leading to the positive regulation of NMDA glutamate receptor activity through the L-glutamate secretion. In terms of tissue distribution, predominantly expressed in the basolateral membrane of the retinal pigment epithelium.

It is found in the cell membrane. It localises to the basolateral cell membrane. The catalysed reaction is chloride(in) = chloride(out). It carries out the reaction hydrogencarbonate(in) = hydrogencarbonate(out). The enzyme catalyses 4-aminobutanoate(in) = 4-aminobutanoate(out). It catalyses the reaction L-glutamate(out) = L-glutamate(in). Inactivated by sulfhydryl-reactive agents. Functionally, ligand-gated anion channel that allows the movement of anions across cell membranes when activated by calcium (Ca2+). Allows the movement of chloride and hydrogencarbonate. Found in a partially open conformation leading to significantly smaller chloride movement. Upon F2R/PAR-1 activation, the sequestered calcium is released into the cytosol of astrocytes, leading to the (Ca2+)-dependent release of L-glutamate into the synaptic cleft that targets the neuronal postsynaptic GRIN2A/NMDAR receptor resulting in the synaptic plasticity regulation. Upon activation of the norepinephrine-alpha-1 adrenergic receptor signaling pathway, transports as well D-serine than L-glutamate in a (Ca2+)-dependent manner, leading to activation of adjacent NMDAR receptors and therefore regulates the heterosynaptic long-term depression and metaplasticity during initial memory acquisition. Releases the 4-aminobutanoate neurotransmitter in a (Ca2+)-dependent manner, and participates in its tonic release from cerebellar glial cells. This chain is Bestrophin-1, found in Homo sapiens (Human).